We begin with the raw amino-acid sequence, 289 residues long: F-box protein PP2-A11 (289 aa).

The F-box domain maps to 23–69 (QPGLGDLPESCVALILQNLDPVEICRFSKLNTAFHGASWADFVWESK).

In terms of assembly, part of a SCF (ASK-cullin-F-box) protein ligase complex. Interacts with SKP1A/ASK1.

Its subcellular location is the nucleus. It participates in protein modification; protein ubiquitination. In terms of biological role, component of SCF(ASK-cullin-F-box) E3 ubiquitin ligase complexes, which may mediate the ubiquitination and subsequent proteasomal degradation of target proteins. The polypeptide is F-box protein PP2-A11 (PP2A11) (Arabidopsis thaliana (Mouse-ear cress)).